We begin with the raw amino-acid sequence, 558 residues long: Phosphatidylserine lipase ABHD16A (558 aa).

2 consecutive transmembrane segments (helical) span residues 60–80 and 93–113; these read ILALASVFWSISYYSSPFAFF and VVPFSHYAGTLLVLLAGVACL. Topologically, residues 114–558 are cytoplasmic; sequence RGIGRWTNPQ…AQHFQMPWCL (445 aa). Positions 281-407 constitute an AB hydrolase-1 domain; the sequence is LVICCEGNAG…LVTRTVRQHL (127 aa). Catalysis depends on charge relay system residues serine 355, aspartate 430, and histidine 507.

It belongs to the AB hydrolase superfamily. ABHD16 family.

The protein resides in the membrane. It carries out the reaction 1-heptadecanoyl-2-(5Z,8Z,11Z,14Z-eicosatetraenoyl)-sn-glycero-3-phosphoserine + H2O = 1-heptadecanoyl-sn-glycero-3-phosphoserine + (5Z,8Z,11Z,14Z)-eicosatetraenoate + H(+). It catalyses the reaction 1-hexadecanoyl-2-(9Z-octadecenoyl)-sn-glycero-3-phospho-L-serine + H2O = 1-hexadecanoyl-sn-glycero-3-phospho-L-serine + (9Z)-octadecenoate + H(+). The catalysed reaction is 1-octadecanoyl-2-(9Z,12Z-octadecadienoyl)-sn-glycero-3-phosphoserine + H2O = 1-octadecanoyl-sn-glycero-3-phosphoserine + (9Z,12Z)-octadecadienoate + H(+). The enzyme catalyses 1-heptadecanoyl-2-(5Z,8Z,11Z,14Z-eicosatetraenoyl)-sn-glycero-3-phosphocholine + H2O = 1-heptadecanoyl-sn-glycero-3-phosphocholine + (5Z,8Z,11Z,14Z)-eicosatetraenoate + H(+). It carries out the reaction 1-hexadecanoyl-2-(9Z-octadecenoyl)-sn-glycero-3-phosphoglycerol + H2O = 1-hexadecanoyl-sn-glycero-3-phosphoglycerol + (9Z)-octadecenoate + H(+). It catalyses the reaction 1-hexadecanoyl-2-(9Z-octadecenoyl)-sn-glycero-3-phospho-(1D-myo-inositol) + H2O = 1-hexadecanoyl-sn-glycero-3-phospho-(1D-myo-inositol) + (9Z)-octadecenoate + H(+). The catalysed reaction is 1-heptadecanoyl-2-(5Z,8Z,11Z,14Z-eicosatetraenoyl)-sn-glycero-3-phosphoethanolamine + H2O = 1-heptadecanoyl-sn-glycero-3-phosphoethanolamine + (5Z,8Z,11Z,14Z)-eicosatetraenoate + H(+). The enzyme catalyses 1-hexadecanoyl-2-(9Z-octadecenoyl)-sn-glycero-3-phospho-(1'-sn-glycerol) + H2O = 1-hexadecanoyl-sn-glycero-3-phospho-(1'-sn-glycerol) + (9Z)-octadecenoate + H(+). It carries out the reaction Hydrolyzes glycerol monoesters of long-chain fatty acids.. It catalyses the reaction 1-tetradecanoylglycerol + H2O = tetradecanoate + glycerol + H(+). The catalysed reaction is 2-hexadecanoylglycerol + H2O = glycerol + hexadecanoate + H(+). The enzyme catalyses 1-(9Z-octadecenoyl)-glycerol + H2O = glycerol + (9Z)-octadecenoate + H(+). It carries out the reaction 2-(9Z-octadecenoyl)-glycerol + H2O = glycerol + (9Z)-octadecenoate + H(+). It catalyses the reaction 2-(9Z,12Z-octadecadienoyl)-glycerol + H2O = (9Z,12Z)-octadecadienoate + glycerol + H(+). The catalysed reaction is 1-(5Z,8Z,11Z,14Z-eicosatetraenoyl)-glycerol + H2O = glycerol + (5Z,8Z,11Z,14Z)-eicosatetraenoate + H(+). The enzyme catalyses 2-(5Z,8Z,11Z,14Z-eicosatetraenoyl)-glycerol + H2O = glycerol + (5Z,8Z,11Z,14Z)-eicosatetraenoate + H(+). It carries out the reaction prostaglandin D2-1-glycerol ester + H2O = prostaglandin D2 + glycerol + H(+). It catalyses the reaction 2-glyceryl-15-deoxy-Delta(12,14)-prostaglandin J2 + H2O = 15-deoxy-Delta(12,14)-prostaglandin J2 + glycerol + H(+). The catalysed reaction is 1-(9Z,12Z-octadecadienoyl)-glycerol + H2O = (9Z,12Z)-octadecadienoate + glycerol + H(+). In terms of biological role, phosphatidylserine (PS) lipase that mediates the hydrolysis of phosphatidylserine to generate lysophosphatidylserine (LPS). LPS constitutes a class of signaling lipids that regulates immunological and neurological processes. Has no activity towards diacylglycerol, triacylglycerol or lysophosphatidylserine lipase. Also has monoacylglycerol lipase activity, with preference for 1-(9Z,12Z-octadecadienoyl)-glycerol (1-LG) and 2-glyceryl-15-deoxy-Delta(12,14)-prostaglandin J2 (15d-PGJ(2)-G). The polypeptide is Phosphatidylserine lipase ABHD16A (Rattus norvegicus (Rat)).